Consider the following 298-residue polypeptide: Acetyl-coenzyme A carboxylase carboxyl transferase subunit beta (298 aa).

The region spanning 25-295 (VWAKCANCGE…SADHREHVVA (271 aa)) is the CoA carboxyltransferase N-terminal domain. Positions 29, 32, 48, and 51 each coordinate Zn(2+). The C4-type zinc finger occupies 29–51 (CANCGELTYQKQFNDALKVCPKC).

Belongs to the AccD/PCCB family. As to quaternary structure, acetyl-CoA carboxylase is a heterohexamer composed of biotin carboxyl carrier protein (AccB), biotin carboxylase (AccC) and two subunits each of ACCase subunit alpha (AccA) and ACCase subunit beta (AccD). It depends on Zn(2+) as a cofactor.

The protein localises to the cytoplasm. It carries out the reaction N(6)-carboxybiotinyl-L-lysyl-[protein] + acetyl-CoA = N(6)-biotinyl-L-lysyl-[protein] + malonyl-CoA. Its pathway is lipid metabolism; malonyl-CoA biosynthesis; malonyl-CoA from acetyl-CoA: step 1/1. Functionally, component of the acetyl coenzyme A carboxylase (ACC) complex. Biotin carboxylase (BC) catalyzes the carboxylation of biotin on its carrier protein (BCCP) and then the CO(2) group is transferred by the transcarboxylase to acetyl-CoA to form malonyl-CoA. The polypeptide is Acetyl-coenzyme A carboxylase carboxyl transferase subunit beta (Herpetosiphon aurantiacus (strain ATCC 23779 / DSM 785 / 114-95)).